A 363-amino-acid chain; its full sequence is Pyrimidine monooxygenase RutA (363 aa).

FMN contacts are provided by residues 49–50 (IK), asparagine 115, glutamate 124, 140–141 (RY), and serine 190.

The protein belongs to the NtaA/SnaA/DszA monooxygenase family. RutA subfamily.

It carries out the reaction uracil + FMNH2 + NADH + O2 = (Z)-3-ureidoacrylate + FMN + NAD(+) + H2O + H(+). It catalyses the reaction thymine + FMNH2 + NADH + O2 = (Z)-2-methylureidoacrylate + FMN + NAD(+) + H2O + H(+). Its function is as follows. Catalyzes the pyrimidine ring opening between N-3 and C-4 by an unusual flavin hydroperoxide-catalyzed mechanism, adding oxygen atoms in the process to yield ureidoacrylate peracid, that immediately reacts with FMN forming ureidoacrylate and FMN-N(5)-oxide. The FMN-N(5)-oxide reacts spontaneously with NADH to produce FMN. Requires the flavin reductase RutF to regenerate FMN in vivo. The chain is Pyrimidine monooxygenase RutA from Rhizobium rhizogenes (strain K84 / ATCC BAA-868) (Agrobacterium radiobacter).